Reading from the N-terminus, the 399-residue chain is Chorismate synthase (399 aa).

NADP(+) contacts are provided by Arg40 and Arg46. FMN contacts are provided by residues 135–137 (RAS), 256–257 (QA), Gly301, 316–320 (KPIAT), and Arg342.

This sequence belongs to the chorismate synthase family. As to quaternary structure, homotetramer. FMNH2 serves as cofactor.

It catalyses the reaction 5-O-(1-carboxyvinyl)-3-phosphoshikimate = chorismate + phosphate. Its pathway is metabolic intermediate biosynthesis; chorismate biosynthesis; chorismate from D-erythrose 4-phosphate and phosphoenolpyruvate: step 7/7. Its function is as follows. Catalyzes the anti-1,4-elimination of the C-3 phosphate and the C-6 proR hydrogen from 5-enolpyruvylshikimate-3-phosphate (EPSP) to yield chorismate, which is the branch point compound that serves as the starting substrate for the three terminal pathways of aromatic amino acid biosynthesis. This reaction introduces a second double bond into the aromatic ring system. This chain is Chorismate synthase, found in Paenarthrobacter aurescens (strain TC1).